The following is a 465-amino-acid chain: Putative F-box protein At1g21990 (465 aa).

The F-box domain maps to Arg-8–Thr-54.

The polypeptide is Putative F-box protein At1g21990 (Arabidopsis thaliana (Mouse-ear cress)).